We begin with the raw amino-acid sequence, 99 residues long: DNA-binding protein HU (99 aa).

The tract at residues 67-86 (REGRNPKTGAKMKIDAYNQP) is disordered.

It belongs to the bacterial histone-like protein family. Homodimer.

Functionally, histone-like DNA-binding protein which is capable of wrapping DNA to stabilize it, and thus to prevent its denaturation under extreme environmental conditions. This Rickettsia conorii (strain ATCC VR-613 / Malish 7) protein is DNA-binding protein HU (hup).